The following is a 77-amino-acid chain: uncharacterized protein (77 aa).

This is an uncharacterized protein from Homo sapiens (Human).